The following is a 1456-amino-acid chain: Ig-like and fibronectin type-III domain-containing protein C27B7.7 (1456 aa).

The signal sequence occupies residues 1-16 (MISLSLVLLLLFGVRC). Fibronectin type-III domains follow at residues 24-128 (NDDS…SINT) and 132-227 (IPKA…TNST). Residues Asn-64, Asn-146, Asn-164, Asn-198, and Asn-225 are each glycosylated (N-linked (GlcNAc...) asparagine). One can recognise an Ig-like 1 domain in the interval 236 to 322 (PDEEYTADPQ…DAGDSSKEVN (87 aa)). The cysteines at positions 254 and 308 are disulfide-linked. Positions 328–426 (PGSPPSEITL…VAMERDTQPI (99 aa)) constitute a Fibronectin type-III 3 domain. Residues Asn-471, Asn-497, and Asn-517 are each glycosylated (N-linked (GlcNAc...) asparagine). Fibronectin type-III domains are found at residues 531-631 (APTQ…TLNG), 636-736 (PPDN…TAYS), and 737-846 (EVPI…WFRT). 3 N-linked (GlcNAc...) asparagine glycosylation sites follow: Asn-658, Asn-691, and Asn-692. The Ig-like 2 domain occupies 841-948 (PRWFRTGHGK…GSSSASVEIR (108 aa)). Cys-877 and Cys-932 are oxidised to a cystine. Asn-893, Asn-898, Asn-969, Asn-1091, Asn-1120, Asn-1133, Asn-1151, Asn-1207, Asn-1268, Asn-1277, Asn-1298, Asn-1350, Asn-1357, and Asn-1382 each carry an N-linked (GlcNAc...) asparagine glycan. In terms of domain architecture, Fibronectin type-III 7 spans 955–1050 (PPENIILTAY…SCISDVLYET (96 aa)). Fibronectin type-III domains lie at 1148–1234 (APTN…TPNG), 1236–1343 (PKTA…ISFD), and 1347–1438 (VIDN…SSPS). Residues 1419–1456 (LGRESPPSEEIDLEFISSPSPTPIISGSRRKVIKEPPL) are disordered. The span at 1434–1445 (ISSPSPTPIISG) shows a compositional bias: low complexity.

It localises to the secreted. The polypeptide is Ig-like and fibronectin type-III domain-containing protein C27B7.7 (Caenorhabditis elegans).